Reading from the N-terminus, the 535-residue chain is Zinc finger protein squeeze (535 aa).

2 stretches are compositionally biased toward low complexity: residues 70–97 and 131–142; these read MVMEQQPHPDQQQQQHLHHPQQQQHPPQ and SSASGSGSNGSS. The disordered stretch occupies residues 70 to 157; that stretch reads MVMEQQPHPD…RRGDGDQAKP (88 aa). Positions 145–156 are enriched in basic and acidic residues; that stretch reads EESRRGDGDQAK. 5 consecutive C2H2-type zinc fingers follow at residues 158–180, 186–208, 214–238, 244–266, and 275–297; these read YKCGSCSKSFANSSYLSQHTRIH, YRCEICQRKFTQLSHLQQHIRTH, YKCRHAGCPKAFSQLSNLQSHSRCH, FKCNSCYKCFSDEMTLLEHIPKH, and HICNLCGKSYTQETYLQKHLQKH. Thr395 is modified (phosphothreonine). Phosphoserine is present on residues Ser399 and Ser401. A disordered region spans residues 417-475; that stretch reads TPQHHLQQQQQQQQQQQAQQQQQAQHQPSPGPGNSAFTPLSATVAPPPHLQQHRGPPGS. The segment covering 419–443 has biased composition (low complexity); that stretch reads QHHLQQQQQQQQQQQAQQQQQAQHQ. Residue Ser475 is modified to Phosphoserine. Tyr479 and Tyr481 each carry phosphotyrosine.

It belongs to the krueppel C2H2-type zinc-finger protein family. In terms of assembly, interacts with nab; which acts as a coactivator. Interacts with ap. In terms of tissue distribution, largely restricted to subsets of cells in the CNS throughout embryonic and first instar larval (L1) development. Expressed in a population of lateral interneurons, primarily projecting axons in the anterior and posterior commissures. Overlaps with ap within the thoracic ap cluster. By stage 17, it is restricted to 2 neurons within the ap-cluster, with one neuron typically continuing to display higher levels of expression. Selectively expressed at higher levels within the FMRFa Tv neurons. Expressed in all leucokinergic cells.

It is found in the nucleus. Transcription factor involved in neuronal fate specification. First required in embryonic CNS development to define the number of cells that express apterous (ap) in the ap thoracic cluster of interneurons. Later on, it plays a central role in the combinatorial code of transcription factors that specifies the fate of the Tv neuron in the ap cluster by participating in the transcription regulation of FMRFa in Tv cells. Also required for projection neuron dendritic targeting. The polypeptide is Zinc finger protein squeeze (sqz) (Drosophila melanogaster (Fruit fly)).